The chain runs to 82 residues: Sec-independent protein translocase protein TatA (82 aa).

The chain crosses the membrane as a helical span at residues 1 to 21 (MGIFDWKHWIVILIVVVLVFG). Residues 43–82 (VNTEEDDKKDQPAAQPAQPLNQPHTIDAQAQKVEEPARKD) form a disordered region.

This sequence belongs to the TatA/E family. In terms of assembly, the Tat system comprises two distinct complexes: a TatABC complex, containing multiple copies of TatA, TatB and TatC subunits, and a separate TatA complex, containing only TatA subunits. Substrates initially bind to the TatABC complex, which probably triggers association of the separate TatA complex to form the active translocon.

It is found in the cell inner membrane. Its function is as follows. Part of the twin-arginine translocation (Tat) system that transports large folded proteins containing a characteristic twin-arginine motif in their signal peptide across membranes. TatA could form the protein-conducting channel of the Tat system. This Pseudomonas aeruginosa (strain LESB58) protein is Sec-independent protein translocase protein TatA.